The chain runs to 1889 residues: Bromodomain adjacent to zinc finger domain protein 2A (1889 aa).

Disordered regions lie at residues 1–59 (MEME…NGLS), 384–433 (FGLN…SPAA), and 479–526 (TTPV…GAVA). Over residues 35–59 (TNGSPMNFPQQGKSLNGDVNVNGLS) the composition is skewed to polar residues. A required for TTF1 binding region spans residues 332-726 (EGNPVISALD…ESQTPVQGQA (395 aa)). Over residues 423 to 433 (PAVSPTASPAA) the composition is skewed to low complexity. Composition is skewed to polar residues over residues 479–489 (TTPVTSPQGSP) and 498–509 (QTVSPARKNVSS). Threonine 499 bears the Phosphothreonine mark. Position 501 is a phosphoserine (serine 501). In terms of domain architecture, MBD spans 538-609 (IATPEEVRLP…EHFSFSPRMP (72 aa)). Position 540 is a phosphothreonine (threonine 540). Residue serine 605 is modified to Phosphoserine. The tract at residues 638–791 (QAITGKRGRP…ARPSCRADKT (154 aa)) is disordered. 2 consecutive DNA-binding regions (a.T hook) follow at residues 641–653 (TGKR…NEKA) and 662–674 (KRGR…IKMP). Over residues 648 to 660 (RNNEKAKNKEVPK) the composition is skewed to basic and acidic residues. Over residues 661-670 (VKRGRGRPPK) the composition is skewed to basic residues. Lysine 672 is subject to N6-acetyllysine; by KAT8. Residues 678 to 701 (NKTDNRLPKKLETQEILSEDDKAK) are compositionally biased toward basic and acidic residues. A coiled-coil region spans residues 686 to 813 (KKLETQEILS…QQAILEEMKK (128 aa)). Residues 702–713 (MTKNKKKMRQKV) show a composition bias toward basic residues. Over residues 716–726 (GESQTPVQGQA) the composition is skewed to polar residues. Composition is skewed to basic and acidic residues over residues 731–740 (KQDTKSLKQK) and 748–791 (AEKE…ADKT). Lysine 790 carries the N6-acetyllysine modification. Residues 839-904 (SRAFSDCLTI…LKAALHDPGL (66 aa)) form the DDT domain. A Glycyl lysine isopeptide (Lys-Gly) (interchain with G-Cter in SUMO2) cross-link involves residue lysine 857. The tract at residues 1039-1063 (EETSGIEEEEEEENTTAVHGRRGRK) is disordered. Serine 1042 bears the Phosphoserine mark. Positions 1042–1052 (SGIEEEEEEEN) are enriched in acidic residues. Glycyl lysine isopeptide (Lys-Gly) (interchain with G-Cter in SUMO2) cross-links involve residues lysine 1141 and lysine 1163. 2 disordered regions span residues 1147–1247 (LMEV…GQSQ) and 1269–1397 (LSSS…GRPP). Serine 1174 carries the post-translational modification Phosphoserine. The a.T hook 3 DNA-binding region spans 1176 to 1188 (ARSRGRPRKPKPG). 3 stretches are compositionally biased toward polar residues: residues 1190–1231 (LQPQ…QPSS), 1269–1278 (LSSSVLTPDS), and 1331–1346 (DQPT…SKPM). A phosphoserine mark is found at serine 1374, serine 1377, and serine 1383. Positions 1390–1402 (PKRRGRPPSKFFK) form a DNA-binding region, a.T hook 4. Position 1545 is a phosphoserine (serine 1545). Glycyl lysine isopeptide (Lys-Gly) (interchain with G-Cter in SUMO2) cross-links involve residues lysine 1662 and lysine 1695. The PHD-type zinc finger occupies 1662-1712 (KVTCLVCRKGDNDEFLLLCDGCDRGCHIYCHRPKMEAVPEGDWFCAVCLSQ). Residues 1720–1778 (QRPGFPKRGQKRKSSFPLTFPEGDSRRRMLSRSRDSPAVPRYPEDGLSPPKRRRHSMRS) are disordered. Serine 1733 carries the post-translational modification Phosphoserine. A Phosphothreonine modification is found at threonine 1738. A compositionally biased stretch (basic and acidic residues) spans 1742 to 1754 (GDSRRRMLSRSRD). Serine 1755 and serine 1767 each carry phosphoserine. Residues 1769–1778 (PKRRRHSMRS) show a composition bias toward basic residues. The 105-residue stretch at 1777–1881 (RSHHSDLTFC…RFFESRWEEF (105 aa)) folds into the Bromo domain.

Belongs to the WAL family. As to quaternary structure, component of the NoRC-1 ISWI chromatin remodeling complex at least composed of SMARCA1 and BAZ2A/TIP5, which regulates the spacing of histone octamers on the DNA template to facilitate access to DNA. Within the NoRC-1 ISWI chromatin remodeling complex interacts with SMARCA1; the interaction is direct. Component of the NoRC-5 ISWI chromatin remodeling complex (also called the NoRC nucleolar-remodeling complex), at least composed of SMARCA5/SNF2H and BAZ2A/TIP5, which regulates the spacing of histone octamers on the DNA template to facilitate access to DNA. Within the NoRC-5 ISWI chromatin remodeling complexes interacts with SMARCA5/SNF2H; the interaction is direct. Interacts with TTF1; the interaction is required for recruitment of the NoRC-5 ISWI chromatin remodeling complex to rDNA. Interacts with HDAC1. Interacts with SIN3A. Interacts with DNMT1 and DNM3B. Interacts with BEND3 and USP21. In terms of processing, ubiquitinated. Deubiquitinated by USP21 leading to its stabilization. Post-translationally, acetylation at Lys-672 by KAT8/MOF promotes its dissociation from pRNA, affecting heterochromatin formation, nucleosome positioning and rDNA silencing. Deacetylation by SIRT1 in late S phase enhances pRNA-binding, allowing de novo DNA methylation and heterochromatin formation. Acetylation is high during S phase and declines to background levels in late S phase when the silent copies of rRNA genes are replicated.

It is found in the nucleus. It localises to the nucleolus. Functionally, regulatory subunit of the ATP-dependent NoRC-1 and NoRC-5 ISWI chromatin remodeling complexes, which form ordered nucleosome arrays on chromatin and facilitate access to DNA during DNA-templated processes such as DNA replication, transcription, and repair. Both complexes regulate the spacing of nucleosomes along the chromatin and have the ability to slide mononucleosomes to the center of a DNA template. Directly stimulates the ATPase activity of SMARCA5 in the NoRC-5 ISWI chromatin remodeling complex. The NoRC-1 ISWI chromatin remodeling complex has a lower ATP hydrolysis rate than the NoRC-5 ISWI chromatin remodeling complex. Within the NoRC-5 ISWI chromatin remodeling complex, mediates silencing of a fraction of rDNA by recruiting histone-modifying enzymes and DNA methyltransferases, leading to heterochromatin formation and transcriptional silencing. In the complex, it plays a central role by being recruited to rDNA and by targeting chromatin modifying enzymes such as HDAC1, leading to repress RNA polymerase I transcription. Recruited to rDNA via its interaction with TTF1 and its ability to recognize and bind histone H4 acetylated on 'Lys-16' (H4K16ac), leading to deacetylation of H4K5ac, H4K8ac, H4K12ac but not H4K16ac. Specifically binds pRNAs, 150-250 nucleotide RNAs that are complementary in sequence to the rDNA promoter; pRNA-binding is required for heterochromatin formation and rDNA silencing. In Mus musculus (Mouse), this protein is Bromodomain adjacent to zinc finger domain protein 2A (Baz2a).